Reading from the N-terminus, the 316-residue chain is MLVVLGLLTSFLSFLYVIAPSIRKFFAGGVCRTDVQLFGKVVVITGANTGIGKETARELARRGARVYIACRDVLKGESAASEIQADTKNSQVLVRKLDLSDTKSIRAFAEGFLAEEKQLHILINNAGVMLCPYSKTADGFETHLAVNHLGHFLLTHLLLGRLKESAPARVVNLSSVAHHLGKIRFHDLQGDKYYNLGFAYCHSKLANVLFTRELAKRLKGTGVTTYAVHPGIVRSKLVRHSFLLCLLWRLFSPFLKTTWEGAQTSLHCALAEGLEPLSGKYFSDCKKTWVSPRARNNKTAERLWNVSCELLGIRWE.

Residue 46-52 coordinates NADP(+); that stretch reads GANTGIG. S175 is a substrate binding site. The active-site Proton acceptor is Y200.

It belongs to the short-chain dehydrogenases/reductases (SDR) family. Expressed in the retina.

The enzyme catalyses all-trans-retinol + NADP(+) = all-trans-retinal + NADPH + H(+). The catalysed reaction is 11-cis-retinol + NADP(+) = 11-cis-retinal + NADPH + H(+). It carries out the reaction 9-cis-retinol + NADP(+) = 9-cis-retinal + NADPH + H(+). It catalyses the reaction a 4-hydroxynonen-1-ol + NADP(+) = a 4-hydroxynonenal + NADPH + H(+). The enzyme catalyses (E)-non-2-en-1-ol + NADP(+) = (E)-non-2-enal + NADPH + H(+). The catalysed reaction is (Z)-non-6-en-1-ol + NADP(+) = (Z)-non-6-enal + NADPH + H(+). It carries out the reaction nonan-1-ol + NADP(+) = nonanal + NADPH + H(+). Its pathway is cofactor metabolism; retinol metabolism. Functionally, retinoids dehydrogenase/reductase with a clear preference for NADP. Displays high activity towards 9-cis, 11-cis and all-trans-retinal. Shows very weak activity towards 13-cis-retinol. Also exhibits activity, albeit with lower affinity than for retinaldehydes, towards lipid peroxidation products (C9 aldehydes) such as 4-hydroxynonenal and trans-2-nonenal. May play an important function in photoreceptor cells to detoxify 4-hydroxynonenal and potentially other toxic aldehyde products resulting from lipid peroxidation. Has no dehydrogenase activity towards steroids. In Bos taurus (Bovine), this protein is Retinol dehydrogenase 12 (RDH12).